Consider the following 823-residue polypeptide: Axial budding pattern protein 2 (823 aa).

The N-terminal stretch at 1–22 is a signal peptide; sequence MTQLQISLLLTATISLLHLVVA. The Extracellular segment spans residues 23–508; it reads TPYEAYPIGK…SHNKKAVAIA (486 aa). Asn41, Asn50, Asn96, Asn117, Asn163, Asn260, Asn266, Asn304, Asn324, Asn359, Asn382, Asn389, Asn403, Asn447, Asn451, and Asn495 each carry an N-linked (GlcNAc...) asparagine glycan. A disordered region spans residues 447–467; the sequence is NHSANATSTRSSHHSTSTSSY. The span at 449 to 467 shows a compositional bias: low complexity; that stretch reads SANATSTRSSHHSTSTSSY. Residues 509 to 529 traverse the membrane as a helical segment; sequence CGVAIPLGVILVALICFLIFW. Over 530 to 823 the chain is Cytoplasmic; sequence RRRRENPDDE…DIHGRIPEML (294 aa). 2 disordered regions span residues 539 to 576 and 596 to 627; these read ENLPHAISGPDLNNPANKPNQENATPLNNPFDDDASSY and HSATESDISSVDEKRDSLSGMNTYNDQFQSQS. Polar residues-rich tracts occupy residues 552 to 566 and 614 to 626; these read NPANKPNQENATPLN and SGMNTYNDQFQSQ. 3 positions are modified to phosphoserine: Ser642, Ser673, and Ser676. 2 disordered regions span residues 700–734 and 751–771; these read PEKEKRTSRDVTMSSLDPWNSNISPSPVRKSVTPS and DSQSGKNGITPTTMSTSSSDD. Positions 709–724 are enriched in polar residues; that stretch reads DVTMSSLDPWNSNISP. Residues 760 to 769 show a composition bias toward low complexity; that stretch reads TPTTMSTSSS.

In terms of assembly, interacts with BEM1, BUD3, BUD4, BUD5, CDC24 and CDC42. Post-translationally, O-glycosylated by PMT4 and N-glycosylated. O-glycosylation increases activity in daughter cells by enhancing stability and promoting localization to the plasma membrane. May also be O-glycosylated by PMT1 and PMT2.

The protein resides in the cell membrane. Functionally, required for haploid cells axial budding pattern. Acts as an anchor to help direct new growth components and/or polarity establishment components like the BUD5 GTP/GDP exchange factor to localize at the cortical axial budding site. Regulates septin organization in late G1 independently of its role in polarity-axis determination. In Saccharomyces cerevisiae (strain ATCC 204508 / S288c) (Baker's yeast), this protein is Axial budding pattern protein 2 (AXL2).